Consider the following 262-residue polypeptide: Flap endonuclease Xni (262 aa).

D112 lines the Mg(2+) pocket. The 5'-3' exonuclease domain occupies 171–258 (QQLNDYWAIT…GFNLKDLRYT (88 aa)). K(+) contacts are provided by I179, V190, and I193. An interaction with DNA region spans residues 192 to 197 (GIGSKG).

The protein belongs to the Xni family. Mg(2+) serves as cofactor. It depends on K(+) as a cofactor.

Functionally, has flap endonuclease activity. During DNA replication, flap endonucleases cleave the 5'-overhanging flap structure that is generated by displacement synthesis when DNA polymerase encounters the 5'-end of a downstream Okazaki fragment. This is Flap endonuclease Xni from Psychromonas ingrahamii (strain DSM 17664 / CCUG 51855 / 37).